Consider the following 466-residue polypeptide: Adenosylhomocysteinase (466 aa).

Substrate-binding residues include T57, D132, and E192. Residue 193–195 participates in NAD(+) binding; that stretch reads TTT. The substrate site is built by K222 and D226. Residues N227, 256-261, E279, N314, 335-337, and N380 contribute to the NAD(+) site; these read GYGDVG and IGH.

Belongs to the adenosylhomocysteinase family. The cofactor is NAD(+).

It is found in the cytoplasm. The catalysed reaction is S-adenosyl-L-homocysteine + H2O = L-homocysteine + adenosine. It functions in the pathway amino-acid biosynthesis; L-homocysteine biosynthesis; L-homocysteine from S-adenosyl-L-homocysteine: step 1/1. Its function is as follows. May play a key role in the regulation of the intracellular concentration of adenosylhomocysteine. This is Adenosylhomocysteinase from Sinorhizobium medicae (strain WSM419) (Ensifer medicae).